We begin with the raw amino-acid sequence, 490 residues long: Zinc finger protein STP4 (490 aa).

Composition is skewed to low complexity over residues M1–S16 and P52–N73. The disordered stretch occupies residues M1–S85. Phosphoserine occurs at positions 153 and 155. Residues Q231–S247 are compositionally biased toward low complexity. Residues Q231–Q273 are disordered. Polar residues predominate over residues S250–K265. The C2H2-type zinc finger occupies H304–H326. Residues E338–E375 are disordered.

The protein resides in the cytoplasm. It localises to the mitochondrion. The protein localises to the nucleus. The polypeptide is Zinc finger protein STP4 (STP4) (Saccharomyces cerevisiae (strain ATCC 204508 / S288c) (Baker's yeast)).